Consider the following 151-residue polypeptide: uncharacterized protein (151 aa).

A run of 3 helical transmembrane segments spans residues 12-32 (LAYFIDGIIVSVPSYIILFII), 59-79 (LAFLPTMLIMIVISVLYYGLL), and 114-134 (YFAYILSGIIFYIGFIMIAFG).

The protein localises to the cell membrane. This is an uncharacterized protein from Bacillus subtilis (strain 168).